The chain runs to 119 residues: Large ribosomal subunit protein bL20c (119 aa).

Belongs to the bacterial ribosomal protein bL20 family.

It is found in the plastid. The protein resides in the chloroplast. Its function is as follows. Binds directly to 23S ribosomal RNA and is necessary for the in vitro assembly process of the 50S ribosomal subunit. It is not involved in the protein synthesizing functions of that subunit. This is Large ribosomal subunit protein bL20c from Amborella trichopoda.